We begin with the raw amino-acid sequence, 227 residues long: Deoxyribose-phosphate aldolase (227 aa).

The active-site Proton donor/acceptor is the aspartate 98. Lysine 161 functions as the Schiff-base intermediate with acetaldehyde in the catalytic mechanism. Lysine 191 (proton donor/acceptor) is an active-site residue.

It belongs to the DeoC/FbaB aldolase family. DeoC type 1 subfamily.

The protein localises to the cytoplasm. The catalysed reaction is 2-deoxy-D-ribose 5-phosphate = D-glyceraldehyde 3-phosphate + acetaldehyde. Its pathway is carbohydrate degradation; 2-deoxy-D-ribose 1-phosphate degradation; D-glyceraldehyde 3-phosphate and acetaldehyde from 2-deoxy-alpha-D-ribose 1-phosphate: step 2/2. Catalyzes a reversible aldol reaction between acetaldehyde and D-glyceraldehyde 3-phosphate to generate 2-deoxy-D-ribose 5-phosphate. The sequence is that of Deoxyribose-phosphate aldolase from Frankia alni (strain DSM 45986 / CECT 9034 / ACN14a).